Consider the following 407-residue polypeptide: S-adenosylmethionine synthase (407 aa).

Histidine 19 contacts ATP. Aspartate 21 is a binding site for Mg(2+). Residue glutamate 47 participates in K(+) binding. L-methionine-binding residues include glutamate 60 and glutamine 103. The flexible loop stretch occupies residues 103 to 113 (QSQEIADGVDN). A disordered region spans residues 107-134 (IADGVDNSDEARTNGDVEEDDRAGAGDQ). ATP contacts are provided by residues 178-180 (DGK), aspartate 258, 264-265 (RK), alanine 281, and lysine 285. Aspartate 258 lines the L-methionine pocket. Lysine 289 serves as a coordination point for L-methionine.

The protein belongs to the AdoMet synthase family. In terms of assembly, homotetramer; dimer of dimers. Mg(2+) serves as cofactor. It depends on K(+) as a cofactor.

The protein localises to the cytoplasm. It catalyses the reaction L-methionine + ATP + H2O = S-adenosyl-L-methionine + phosphate + diphosphate. Its pathway is amino-acid biosynthesis; S-adenosyl-L-methionine biosynthesis; S-adenosyl-L-methionine from L-methionine: step 1/1. Functionally, catalyzes the formation of S-adenosylmethionine (AdoMet) from methionine and ATP. The overall synthetic reaction is composed of two sequential steps, AdoMet formation and the subsequent tripolyphosphate hydrolysis which occurs prior to release of AdoMet from the enzyme. In Corynebacterium glutamicum (strain ATCC 13032 / DSM 20300 / JCM 1318 / BCRC 11384 / CCUG 27702 / LMG 3730 / NBRC 12168 / NCIMB 10025 / NRRL B-2784 / 534), this protein is S-adenosylmethionine synthase.